A 535-amino-acid chain; its full sequence is MSIIDHHSVVPRSEAAVGEDGRARTYEVRTFGCQMNVHDSERLSGSLEAAGYVPANGEEADIVVINTCAVRENADNKLYGNLGHLASVKRRHAGMQIAVGGCLAQKDKNVILEKAPWVDVVFGTHNMGALPRLLERARHNDAAEIEILEALETFPSTLPTKRDSSFSGWVSISVGCNNTCTFCIVPALRGKEKDRRPGDILAEVQALVDEGAVEVTLLGQNVNSYGVEFGDRQAFSKLLRAAGQIEGLERIRFTSPHPAAFTEDVIDAMAETPNVMPQLHMPLQSGSDRILRSMRRSYRSEKFLGILDRVRAKLPGAAISTDIIVGFPGETEEDFLDTLRVVEAARFASAFTFQYSIRPGTPAATMAGQVPKEVVQERYDRLIALQERISLEENEKLIGRDVELLVATGEGRKDADTRRLSGRARDSRLVHFELPAGSEVPRPGDVALVRVTQAAPHYLIADAAGGPLRVRRTRAGDAWDRAEAESCAAPSLSGGRAAAAVGRVSLGLPTLRTREPLTSPGVGTMPLYDPTDGQR.

Residues Arg-24–His-139 enclose the MTTase N-terminal domain. [4Fe-4S] cluster-binding residues include Cys-33, Cys-68, Cys-102, Cys-176, Cys-180, and Cys-183. The Radical SAM core domain maps to Arg-162 to Glu-392. The region spanning Glu-395–Gly-465 is the TRAM domain. A disordered region spans residues Arg-512 to Arg-535.

Belongs to the methylthiotransferase family. MiaB subfamily. As to quaternary structure, monomer. The cofactor is [4Fe-4S] cluster.

Its subcellular location is the cytoplasm. The enzyme catalyses N(6)-dimethylallyladenosine(37) in tRNA + (sulfur carrier)-SH + AH2 + 2 S-adenosyl-L-methionine = 2-methylsulfanyl-N(6)-dimethylallyladenosine(37) in tRNA + (sulfur carrier)-H + 5'-deoxyadenosine + L-methionine + A + S-adenosyl-L-homocysteine + 2 H(+). Its function is as follows. Catalyzes the methylthiolation of N6-(dimethylallyl)adenosine (i(6)A), leading to the formation of 2-methylthio-N6-(dimethylallyl)adenosine (ms(2)i(6)A) at position 37 in tRNAs that read codons beginning with uridine. This Leifsonia xyli subsp. xyli (strain CTCB07) protein is tRNA-2-methylthio-N(6)-dimethylallyladenosine synthase.